The sequence spans 522 residues: Type-2 serine--tRNA ligase (522 aa).

A319 is a binding site for L-serine. C321 lines the Zn(2+) pocket. Position 350 (R350) interacts with L-serine. ATP contacts are provided by residues 350–352 (RWE) and 361–362 (RV). 367-369 (RIE) provides a ligand contact to L-serine. The Zn(2+) site is built by E369 and C476. R483 lines the ATP pocket.

The protein belongs to the class-II aminoacyl-tRNA synthetase family. Type-2 seryl-tRNA synthetase subfamily. In terms of assembly, homodimer. The cofactor is Zn(2+).

The protein localises to the cytoplasm. It catalyses the reaction tRNA(Ser) + L-serine + ATP = L-seryl-tRNA(Ser) + AMP + diphosphate + H(+). It carries out the reaction tRNA(Sec) + L-serine + ATP = L-seryl-tRNA(Sec) + AMP + diphosphate + H(+). Its pathway is aminoacyl-tRNA biosynthesis; selenocysteinyl-tRNA(Sec) biosynthesis; L-seryl-tRNA(Sec) from L-serine and tRNA(Sec): step 1/1. Catalyzes the attachment of serine to tRNA(Ser). Is also able to aminoacylate tRNA(Sec) with serine, to form the misacylated tRNA L-seryl-tRNA(Sec), which will be further converted into selenocysteinyl-tRNA(Sec). The protein is Type-2 serine--tRNA ligase (serS) of Methanococcus aeolicus (strain ATCC BAA-1280 / DSM 17508 / OCM 812 / Nankai-3).